We begin with the raw amino-acid sequence, 192 residues long: Fe/S biogenesis protein NfuA (192 aa).

Positions 149 and 152 each coordinate [4Fe-4S] cluster.

It belongs to the NfuA family. As to quaternary structure, homodimer. [4Fe-4S] cluster is required as a cofactor.

In terms of biological role, involved in iron-sulfur cluster biogenesis. Binds a 4Fe-4S cluster, can transfer this cluster to apoproteins, and thereby intervenes in the maturation of Fe/S proteins. Could also act as a scaffold/chaperone for damaged Fe/S proteins. The chain is Fe/S biogenesis protein NfuA from Alteromonas mediterranea (strain DSM 17117 / CIP 110805 / LMG 28347 / Deep ecotype).